The primary structure comprises 285 residues: Bifunctional protein FolD (285 aa).

NADP(+) contacts are provided by residues 166 to 168 (GAS) and Ile232.

Belongs to the tetrahydrofolate dehydrogenase/cyclohydrolase family. Homodimer.

The catalysed reaction is (6R)-5,10-methylene-5,6,7,8-tetrahydrofolate + NADP(+) = (6R)-5,10-methenyltetrahydrofolate + NADPH. It catalyses the reaction (6R)-5,10-methenyltetrahydrofolate + H2O = (6R)-10-formyltetrahydrofolate + H(+). The protein operates within one-carbon metabolism; tetrahydrofolate interconversion. Catalyzes the oxidation of 5,10-methylenetetrahydrofolate to 5,10-methenyltetrahydrofolate and then the hydrolysis of 5,10-methenyltetrahydrofolate to 10-formyltetrahydrofolate. The sequence is that of Bifunctional protein FolD from Vibrio atlanticus (strain LGP32) (Vibrio splendidus (strain Mel32)).